Reading from the N-terminus, the 832-residue chain is Leucine--tRNA ligase (832 aa).

A 'HIGH' region motif is present at residues 58-68 (PYPSGDLHMGH). Positions 598–602 (AMSKS) match the 'KMSKS' region motif. Lys601 is an ATP binding site.

It belongs to the class-I aminoacyl-tRNA synthetase family.

The protein localises to the cytoplasm. It carries out the reaction tRNA(Leu) + L-leucine + ATP = L-leucyl-tRNA(Leu) + AMP + diphosphate. This chain is Leucine--tRNA ligase, found in Acidothermus cellulolyticus (strain ATCC 43068 / DSM 8971 / 11B).